The following is a 366-amino-acid chain: Alanine racemase (366 aa).

Catalysis depends on K40, which acts as the Proton acceptor; specific for D-alanine. K40 is modified (N6-(pyridoxal phosphate)lysine). R136 serves as a coordination point for substrate. Catalysis depends on Y263, which acts as the Proton acceptor; specific for L-alanine. M310 provides a ligand contact to substrate.

The protein belongs to the alanine racemase family. Requires pyridoxal 5'-phosphate as cofactor.

The enzyme catalyses L-alanine = D-alanine. It participates in amino-acid biosynthesis; D-alanine biosynthesis; D-alanine from L-alanine: step 1/1. Its function is as follows. Catalyzes the interconversion of L-alanine and D-alanine. May also act on other amino acids. This chain is Alanine racemase (alr), found in Streptococcus equi subsp. zooepidemicus (strain H70).